The following is a 237-amino-acid chain: Cyclic nucleotide phosphodiesterase inhibitor (237 aa).

A signal peptide spans 1 to 20 (MAKIIISLILLLSLFSFSYG). Residues N28, N65, and N70 are each glycosylated (N-linked (GlcNAc...) asparagine). Cys-rich CT repeat units lie at residues 57–81 (DLCH…CNDN), 82–105 (NPCT…CDPG), 116–139 (DPCT…CNDG), 140–162 (DACT…CDDN), and 163–186 (DPCT…CSIK). N153 carries an N-linked (GlcNAc...) asparagine glycan. A glycan (N-linked (GlcNAc...) asparagine) is linked at N207.

PDI acts by binding stoichiometrically to cyclic nucleotide phosphodiesterase, changing the KM of the enzyme for cAMP from 10 uM to 2 mM. The sequence is that of Cyclic nucleotide phosphodiesterase inhibitor (pdiA) from Dictyostelium discoideum (Social amoeba).